The sequence spans 943 residues: Isoleucine--tRNA ligase (943 aa).

The 'HIGH' region signature appears at 59 to 69; the sequence is PYANGQIHLGH. Glu-577 serves as a coordination point for L-isoleucyl-5'-AMP. A 'KMSKS' region motif is present at residues 618–622; it reads KMSKS. An ATP-binding site is contributed by Lys-621. Residues Cys-906, Cys-909, Cys-926, and Cys-929 each contribute to the Zn(2+) site.

This sequence belongs to the class-I aminoacyl-tRNA synthetase family. IleS type 1 subfamily. Monomer. It depends on Zn(2+) as a cofactor.

Its subcellular location is the cytoplasm. The enzyme catalyses tRNA(Ile) + L-isoleucine + ATP = L-isoleucyl-tRNA(Ile) + AMP + diphosphate. Catalyzes the attachment of isoleucine to tRNA(Ile). As IleRS can inadvertently accommodate and process structurally similar amino acids such as valine, to avoid such errors it has two additional distinct tRNA(Ile)-dependent editing activities. One activity is designated as 'pretransfer' editing and involves the hydrolysis of activated Val-AMP. The other activity is designated 'posttransfer' editing and involves deacylation of mischarged Val-tRNA(Ile). This Xanthomonas axonopodis pv. citri (strain 306) protein is Isoleucine--tRNA ligase.